A 348-amino-acid chain; its full sequence is Dihydroorotase (348 aa).

2 residues coordinate Zn(2+): His-17 and His-19. Substrate contacts are provided by residues 19-21 and Asn-45; that span reads HLR. Residues Lys-103, His-140, and His-178 each coordinate Zn(2+). Lys-103 is subject to N6-carboxylysine. A substrate-binding site is contributed by His-140. Leu-223 is a binding site for substrate. Residue Asp-251 coordinates Zn(2+). Asp-251 is an active-site residue. Residues His-255 and Ala-267 each contribute to the substrate site.

The protein belongs to the metallo-dependent hydrolases superfamily. DHOase family. Class II DHOase subfamily. As to quaternary structure, homodimer. Zn(2+) serves as cofactor.

It carries out the reaction (S)-dihydroorotate + H2O = N-carbamoyl-L-aspartate + H(+). It functions in the pathway pyrimidine metabolism; UMP biosynthesis via de novo pathway; (S)-dihydroorotate from bicarbonate: step 3/3. In terms of biological role, catalyzes the reversible cyclization of carbamoyl aspartate to dihydroorotate. The polypeptide is Dihydroorotase (Escherichia fergusonii (strain ATCC 35469 / DSM 13698 / CCUG 18766 / IAM 14443 / JCM 21226 / LMG 7866 / NBRC 102419 / NCTC 12128 / CDC 0568-73)).